Reading from the N-terminus, the 22-residue chain is Brevinin-2LTa (22 aa).

Expressed by the skin glands.

The protein resides in the secreted. Has antibacterial activity. The chain is Brevinin-2LTa from Rana latastei (Italian agile frog).